We begin with the raw amino-acid sequence, 104 residues long: Large ribosomal subunit protein uL24 (104 aa).

The protein belongs to the universal ribosomal protein uL24 family. In terms of assembly, part of the 50S ribosomal subunit.

In terms of biological role, one of two assembly initiator proteins, it binds directly to the 5'-end of the 23S rRNA, where it nucleates assembly of the 50S subunit. Its function is as follows. One of the proteins that surrounds the polypeptide exit tunnel on the outside of the subunit. The sequence is that of Large ribosomal subunit protein uL24 from Pseudoalteromonas translucida (strain TAC 125).